We begin with the raw amino-acid sequence, 822 residues long: Sodium/hydrogen exchanger 1 (822 aa).

Topologically, residues 1-102 are extracellular; it reads MMLRWSGIWG…FPVLDIDYLH (102 aa). A disordered region spans residues 41–73; that stretch reads SPTANTIRGAEPPRERSIGDVTTAPSEPVHHPD. A helical membrane pass occupies residues 103 to 125; sequence VRTPFEISLWILLACLMKIGFHV. Residues 126 to 134 are Cytoplasmic-facing; that stretch reads IPTISSIVP. Residues 135-152 traverse the membrane as a helical segment; it reads ESCLLIVVGLLVGGLIKG. The Extracellular segment spans residues 153-162; the sequence is VGETPPFLQS. The chain crosses the membrane as a helical span at residues 163–180; that stretch reads DVFFLFLLPPIILDAGYF. Residues 181–190 are Cytoplasmic-facing; it reads LPLRQFTENL. A helical membrane pass occupies residues 191 to 219; sequence GTILIFAVVGTLWNAFFLGGLLYAVCLVG. Topologically, residues 220–226 are extracellular; sequence GEQINNI. The helical transmembrane segment at 227 to 253 threads the bilayer; the sequence is GLLDTLLFGSIISAVDPVAVVAVFEEI. At 254 to 256 the chain is on the cytoplasmic side; it reads HIN. Residues 257–287 traverse the membrane as a helical segment; that stretch reads ELLHILVFGESLLNDAVTVVLYHLFEEFANY. The Extracellular portion of the chain corresponds to 288–291; sequence DSIG. Residues 292–326 traverse the membrane as a helical segment; sequence ISDIFLGFLSFFVVALGGVFVGVVYGVIAAFTSRF. At 327–332 the chain is on the cytoplasmic side; the sequence is TSHIRV. A helical transmembrane segment spans residues 333–345; it reads IEPLFVFLYSYMA. Residues 346-354 are Extracellular-facing; that stretch reads YLSAELFHL. Residues 355 to 375 traverse the membrane as a helical segment; the sequence is SGIMALIASGVVMRPYVEANI. Residues 376–377 lie on the Cytoplasmic side of the membrane; that stretch reads SH. A helical transmembrane segment spans residues 378–408; that stretch reads KSHTTIKYFLKMWSSVSETLIFIFLGVSTVA. Over 409–414 the chain is Extracellular; the sequence is GSHQWN. A helical membrane pass occupies residues 415–442; it reads WTFVISTLLFCLIARVLGVLVLTWFINK. Residues 443 to 448 lie on the Cytoplasmic side of the membrane; sequence FRIVKL. The chain crosses the membrane as a helical span at residues 449–473; sequence TPKDQFIIAYGGLRGAIAFSLGYLM. The Extracellular segment spans residues 474-479; it reads DKKHFP. Residues 480 to 509 form a helical membrane-spanning segment; the sequence is MCDLFLTAIITVIFFTVFVQGMTIRPLVDL. The interval 507–549 is interaction with TESC; sequence VDLLAVKKKQETKRSINEEIHTQFLDHLLTGIEDICGHYGHHH. The Cytoplasmic portion of the chain corresponds to 510 to 822; it reads LAVKKKQETK…EGEPFIPKGE (313 aa). A PI(4,5)P2-binding region region spans residues 513–520; sequence KKKQETKR. The interaction with CHP2 stretch occupies residues 519 to 549; that stretch reads KRSINEEIHTQFLDHLLTGIEDICGHYGHHH. The confers pH-dependent PI(4,5)P2 binding stretch occupies residues 544–549; that stretch reads HYGHHH. A PI(4,5)P2-binding region region spans residues 556 to 564; that stretch reads RFNKKYVKK. Residues serine 603 and serine 606 each carry the phosphoserine modification. A Phosphothreonine modification is found at threonine 607. Residues serine 609 and serine 652 each carry the phosphoserine modification. Residues 637–822 form an interaction with TESC region; that stretch reads KILRSNLQKT…EGEPFIPKGE (186 aa). The interaction with CALM1 stretch occupies residues 637-822; the sequence is KILRSNLQKT…EGEPFIPKGE (186 aa). The tract at residues 688 to 691 is interaction with PPP3CA; it reads LTVP. Phosphoserine is present on residues serine 697, serine 701, and serine 707. Positions 719-724 are interaction with PPP3CA; it reads PVITID. Serine 727, serine 730, and serine 733 each carry phosphoserine. The disordered stretch occupies residues 752–822; it reads PTRLTRGEED…EGEPFIPKGE (71 aa). Threonine 756 bears the Phosphothreonine mark. The span at 759-768 shows a compositional bias: acidic residues; it reads EEDEDEDEDG. At threonine 786 the chain carries Phosphothreonine. A phosphoserine mark is found at serine 792, serine 794, and serine 803.

This sequence belongs to the monovalent cation:proton antiporter 1 (CPA1) transporter (TC 2.A.36) family. As to quaternary structure, homodimer; dimerization is crucial for its function. Oligomer. Interacts with CALM in a calcium-dependent manner. Interacts with TESC. Interacts (via the juxtamembrane region of the cytoplasmic C-terminal domain) with CHP1; the interaction occurs at the plasma membrane in a calcium-dependent manner. Interacts with CHP2; the interaction occurs in a calcium-dependent manner. Interacts with EZR; regulates the cytoskeletal interactions of SLC9A1 and promotes stress fiber formation. Ubiquitinated, leading to its degradation by the proteasome. Ubiquitination is reduced by CHP1. In terms of processing, O-glycosylated. Post-translationally, palmitoylated; may play a major role in SLC9A1 regulation. Phosphorylation at Thr-786 increases SLC9A1 activity. Specifically dephosphorylated at Thr-786 by PPP3CA that negatively regulates SLC9A1 activity. Phosphorylation at Ser-652 by AKT1 reduces SLC9A1 binding to CALM1.

It localises to the cell membrane. The protein localises to the basolateral cell membrane. It carries out the reaction Na(+)(in) + H(+)(out) = Na(+)(out) + H(+)(in). The catalysed reaction is Li(+)(out) + H(+)(in) = Li(+)(in) + H(+)(out). It catalyses the reaction Li(+)(in) + Na(+)(out) = Li(+)(out) + Na(+)(in). With respect to regulation, activated at acidic pHs. Inhibited by amiloride and 5-amino-substituted derivatives. Inhibited by cariporide and eniporide. Phosphatidylinositol 4,5-bisphosphate (PI(4,5)P2) and phosphatidylinositol 3,4,5-trisphosphate (PI(3,4,5)P3) bind and differentially regulate SLC9A1 activity. In terms of biological role, electroneutral Na(+) /H(+) antiporter that extrudes Na(+) in exchange for external protons driven by the inward sodium ion chemical gradient, protecting cells from acidification that occurs from metabolism. Exchanges intracellular H(+) ions for extracellular Na(+) in 1:1 stoichiometry. Plays a key role in maintening intracellular pH neutral and cell volume, and thus is important for cell growth, proliferation, migration and survival. In addition, can transport lithium Li(+) and also functions as a Na(+)/Li(+) antiporter. SLC9A1 also functions in membrane anchoring and organization of scaffolding complexes that coordinate signaling inputs. The polypeptide is Sodium/hydrogen exchanger 1 (SLC9A1) (Cricetulus griseus (Chinese hamster)).